The sequence spans 643 residues: Threonine--tRNA ligase (643 aa).

The region spanning 3–64 (DVVKITFPDG…EEDGAISIIT (62 aa)) is the TGS domain. The interval 245 to 542 (DHRKLGKELD…LIEEYKGAFP (298 aa)) is catalytic. Zn(2+) contacts are provided by Cys338, His389, and His519.

This sequence belongs to the class-II aminoacyl-tRNA synthetase family. In terms of assembly, homodimer. Zn(2+) is required as a cofactor.

The protein resides in the cytoplasm. It carries out the reaction tRNA(Thr) + L-threonine + ATP = L-threonyl-tRNA(Thr) + AMP + diphosphate + H(+). In terms of biological role, catalyzes the attachment of threonine to tRNA(Thr) in a two-step reaction: L-threonine is first activated by ATP to form Thr-AMP and then transferred to the acceptor end of tRNA(Thr). Also edits incorrectly charged L-seryl-tRNA(Thr). The chain is Threonine--tRNA ligase from Anoxybacillus flavithermus (strain DSM 21510 / WK1).